The primary structure comprises 456 residues: Methylenetetrahydrofolate--tRNA-(uracil-5-)-methyltransferase TrmFO (456 aa).

12–17 (GGGLAG) contributes to the FAD binding site.

The protein belongs to the MnmG family. TrmFO subfamily. It depends on FAD as a cofactor.

It localises to the cytoplasm. It catalyses the reaction uridine(54) in tRNA + (6R)-5,10-methylene-5,6,7,8-tetrahydrofolate + NADH + H(+) = 5-methyluridine(54) in tRNA + (6S)-5,6,7,8-tetrahydrofolate + NAD(+). The catalysed reaction is uridine(54) in tRNA + (6R)-5,10-methylene-5,6,7,8-tetrahydrofolate + NADPH + H(+) = 5-methyluridine(54) in tRNA + (6S)-5,6,7,8-tetrahydrofolate + NADP(+). Its function is as follows. Catalyzes the folate-dependent formation of 5-methyl-uridine at position 54 (M-5-U54) in all tRNAs. This chain is Methylenetetrahydrofolate--tRNA-(uracil-5-)-methyltransferase TrmFO, found in Picosynechococcus sp. (strain ATCC 27264 / PCC 7002 / PR-6) (Agmenellum quadruplicatum).